The primary structure comprises 490 residues: Probable cytosol aminopeptidase (490 aa).

Residues K256 and D261 each contribute to the Mn(2+) site. Residue K268 is part of the active site. Mn(2+) is bound by residues D280, D340, and E342. Residue R344 is part of the active site.

Belongs to the peptidase M17 family. Mn(2+) is required as a cofactor.

It is found in the cytoplasm. It carries out the reaction Release of an N-terminal amino acid, Xaa-|-Yaa-, in which Xaa is preferably Leu, but may be other amino acids including Pro although not Arg or Lys, and Yaa may be Pro. Amino acid amides and methyl esters are also readily hydrolyzed, but rates on arylamides are exceedingly low.. It catalyses the reaction Release of an N-terminal amino acid, preferentially leucine, but not glutamic or aspartic acids.. Presumably involved in the processing and regular turnover of intracellular proteins. Catalyzes the removal of unsubstituted N-terminal amino acids from various peptides. The protein is Probable cytosol aminopeptidase of Prochlorococcus marinus (strain MIT 9313).